We begin with the raw amino-acid sequence, 161 residues long: Phosphopantetheine adenylyltransferase (161 aa).

Residue T9 participates in substrate binding. ATP contacts are provided by residues 9 to 10 (TF) and H17. Substrate-binding residues include K41, L73, and R87. Residues 88–90 (GLR), E98, and 123–129 (YSFISST) contribute to the ATP site.

Belongs to the bacterial CoaD family. Homohexamer. Mg(2+) serves as cofactor.

The protein resides in the cytoplasm. The catalysed reaction is (R)-4'-phosphopantetheine + ATP + H(+) = 3'-dephospho-CoA + diphosphate. It participates in cofactor biosynthesis; coenzyme A biosynthesis; CoA from (R)-pantothenate: step 4/5. Its function is as follows. Reversibly transfers an adenylyl group from ATP to 4'-phosphopantetheine, yielding dephospho-CoA (dPCoA) and pyrophosphate. The protein is Phosphopantetheine adenylyltransferase of Pseudomonas putida (strain ATCC 47054 / DSM 6125 / CFBP 8728 / NCIMB 11950 / KT2440).